We begin with the raw amino-acid sequence, 156 residues long: Myosin, essential light chain, adductor muscle (156 aa).

2 EF-hand domains span residues 6–43 and 81–116; these read DEID…LGIN and GTFA…LGER.

In molluscan muscle, calcium regulation is associated with myosin rather than with actin. Muscle myosin contains two types of light chains: the catalytic light chain, essential for ATPase activity, and the regulatory light chain, a calcium-binding protein responsible for Ca(2+) dependent binding and Ca(2+) dependent Mg-ATPase activity. This chain is Myosin, essential light chain, adductor muscle, found in Mizuhopecten yessoensis (Japanese scallop).